We begin with the raw amino-acid sequence, 417 residues long: Serine hydroxymethyltransferase (417 aa).

Residues Leu-112 and 116 to 118 contribute to the (6S)-5,6,7,8-tetrahydrofolate site; that span reads GHL. Residue Lys-221 is modified to N6-(pyridoxal phosphate)lysine. Residue Glu-247 coordinates (6S)-5,6,7,8-tetrahydrofolate.

Belongs to the SHMT family. Homodimer. Pyridoxal 5'-phosphate is required as a cofactor.

The protein resides in the cytoplasm. The catalysed reaction is (6R)-5,10-methylene-5,6,7,8-tetrahydrofolate + glycine + H2O = (6S)-5,6,7,8-tetrahydrofolate + L-serine. The protein operates within one-carbon metabolism; tetrahydrofolate interconversion. It functions in the pathway amino-acid biosynthesis; glycine biosynthesis; glycine from L-serine: step 1/1. Its function is as follows. Catalyzes the reversible interconversion of serine and glycine with tetrahydrofolate (THF) serving as the one-carbon carrier. This reaction serves as the major source of one-carbon groups required for the biosynthesis of purines, thymidylate, methionine, and other important biomolecules. Also exhibits THF-independent aldolase activity toward beta-hydroxyamino acids, producing glycine and aldehydes, via a retro-aldol mechanism. The polypeptide is Serine hydroxymethyltransferase (Borreliella burgdorferi (strain ATCC 35210 / DSM 4680 / CIP 102532 / B31) (Borrelia burgdorferi)).